The chain runs to 319 residues: ATP-dependent 6-phosphofructokinase (319 aa).

Glycine 11 is a binding site for ATP. 21–25 (RAVVR) contacts ADP. Residues 72–73 (RC) and 102–105 (GDGS) contribute to the ATP site. Position 103 (aspartate 103) interacts with Mg(2+). Residue 125–127 (TID) coordinates substrate. Catalysis depends on aspartate 127, which acts as the Proton acceptor. ADP is bound at residue arginine 154. 169–171 (MGR) contacts substrate. Residues 185–187 (GAE), arginine 211, and 213–215 (KKH) contribute to the ADP site. Substrate-binding positions include glutamate 222, arginine 243, and 249 to 252 (HIQR).

This sequence belongs to the phosphofructokinase type A (PFKA) family. ATP-dependent PFK group I subfamily. Prokaryotic clade 'B1' sub-subfamily. Homotetramer. The cofactor is Mg(2+).

The protein resides in the cytoplasm. The catalysed reaction is beta-D-fructose 6-phosphate + ATP = beta-D-fructose 1,6-bisphosphate + ADP + H(+). It participates in carbohydrate degradation; glycolysis; D-glyceraldehyde 3-phosphate and glycerone phosphate from D-glucose: step 3/4. Its activity is regulated as follows. Allosterically activated by ADP and other diphosphonucleosides, and allosterically inhibited by phosphoenolpyruvate. Catalyzes the phosphorylation of D-fructose 6-phosphate to fructose 1,6-bisphosphate by ATP, the first committing step of glycolysis. This is ATP-dependent 6-phosphofructokinase from Lysinibacillus sphaericus (Bacillus sphaericus).